A 157-amino-acid chain; its full sequence is Small ribosomal subunit protein uS9 (157 aa).

Belongs to the universal ribosomal protein uS9 family.

In Caulobacter sp. (strain K31), this protein is Small ribosomal subunit protein uS9.